Reading from the N-terminus, the 280-residue chain is L-proline cis-4-hydroxylase (280 aa).

Fe cation is bound by residues histidine 106, aspartate 108, and histidine 154. Residue arginine 164 participates in 2-oxoglutarate binding.

Belongs to the L-proline cis-4-/cis-3-hydroxylase family. Fe(2+) serves as cofactor.

It carries out the reaction L-proline + 2-oxoglutarate + O2 = cis-4-hydroxy-L-proline + succinate + CO2. Its activity is regulated as follows. Inhibited by metal ions such as Co(2+), Zn(2+), Cu(2+) or Ni(2+). Is also inhibited by EDTA or diethylpyrocarbonate (DEPC) in vitro. Unlike the procollagen-proline cis-3- and trans-4-hydroxylases from mammals, does not necessarily require L-ascorbate for activity although it does increase the activity of the enzyme. Its function is as follows. Dioxygenase that catalyzes the 2-oxoglutarate-dependent selective hydroxylation of free L-proline to cis-4-hydroxy-L-proline (cis-4-Hyp). This Mesorhizobium japonicum (strain LMG 29417 / CECT 9101 / MAFF 303099) (Mesorhizobium loti (strain MAFF 303099)) protein is L-proline cis-4-hydroxylase.